The following is a 247-amino-acid chain: 4-hydroxy-tetrahydrodipicolinate reductase (247 aa).

NAD(+) is bound by residues 12-17, 78-80, and 102-105; these read GITGRM, GTT, and AANF. His136 functions as the Proton donor/acceptor in the catalytic mechanism. Position 137 (His137) interacts with (S)-2,3,4,5-tetrahydrodipicolinate. Lys140 acts as the Proton donor in catalysis. 146 to 147 serves as a coordination point for (S)-2,3,4,5-tetrahydrodipicolinate; sequence GT.

Belongs to the DapB family.

The protein resides in the cytoplasm. It catalyses the reaction (S)-2,3,4,5-tetrahydrodipicolinate + NAD(+) + H2O = (2S,4S)-4-hydroxy-2,3,4,5-tetrahydrodipicolinate + NADH + H(+). It carries out the reaction (S)-2,3,4,5-tetrahydrodipicolinate + NADP(+) + H2O = (2S,4S)-4-hydroxy-2,3,4,5-tetrahydrodipicolinate + NADPH + H(+). Its pathway is amino-acid biosynthesis; L-lysine biosynthesis via DAP pathway; (S)-tetrahydrodipicolinate from L-aspartate: step 4/4. In terms of biological role, catalyzes the conversion of 4-hydroxy-tetrahydrodipicolinate (HTPA) to tetrahydrodipicolinate. The chain is 4-hydroxy-tetrahydrodipicolinate reductase from Acidiphilium cryptum (strain JF-5).